The chain runs to 511 residues: Dihydrolipoyl dehydrogenase, mitochondrial (511 aa).

FAD is bound by residues 75–84 (EKRGTLGGTC), lysine 93, glycine 157, and 187–189 (TGS). An intrachain disulfide couples cysteine 84 to cysteine 89. NAD(+) is bound by residues 224 to 231 (GGGIIGLE), glutamate 247, leucine 281, and glycine 316. FAD is bound by residues aspartate 357 and 363–366 (MLAH). Histidine 489 (proton acceptor) is an active-site residue.

This sequence belongs to the class-I pyridine nucleotide-disulfide oxidoreductase family. In terms of assembly, homodimer. It depends on FAD as a cofactor.

The protein localises to the mitochondrion matrix. It catalyses the reaction N(6)-[(R)-dihydrolipoyl]-L-lysyl-[protein] + NAD(+) = N(6)-[(R)-lipoyl]-L-lysyl-[protein] + NADH + H(+). Its function is as follows. Lipoamide dehydrogenase is a component of the alpha-ketoacid dehydrogenase complexes. Malfunction of this protein blocks the progression of cell cycle from G1 to S phase. In Schizosaccharomyces pombe (strain 972 / ATCC 24843) (Fission yeast), this protein is Dihydrolipoyl dehydrogenase, mitochondrial (dld1).